We begin with the raw amino-acid sequence, 434 residues long: 3-phosphoshikimate 1-carboxyvinyltransferase (434 aa).

3 residues coordinate 3-phosphoshikimate: Lys22, Ser23, and Arg27. Lys22 is a binding site for phosphoenolpyruvate. Residues Gly94 and Arg122 each coordinate phosphoenolpyruvate. Ser167, Gln169, Asp314, and Lys341 together coordinate 3-phosphoshikimate. Residue Gln169 participates in phosphoenolpyruvate binding. Asp314 serves as the catalytic Proton acceptor. Phosphoenolpyruvate is bound by residues Arg345 and Arg391.

This sequence belongs to the EPSP synthase family. Monomer.

It is found in the cytoplasm. It carries out the reaction 3-phosphoshikimate + phosphoenolpyruvate = 5-O-(1-carboxyvinyl)-3-phosphoshikimate + phosphate. The protein operates within metabolic intermediate biosynthesis; chorismate biosynthesis; chorismate from D-erythrose 4-phosphate and phosphoenolpyruvate: step 6/7. Functionally, catalyzes the transfer of the enolpyruvyl moiety of phosphoenolpyruvate (PEP) to the 5-hydroxyl of shikimate-3-phosphate (S3P) to produce enolpyruvyl shikimate-3-phosphate and inorganic phosphate. This Leuconostoc mesenteroides subsp. mesenteroides (strain ATCC 8293 / DSM 20343 / BCRC 11652 / CCM 1803 / JCM 6124 / NCDO 523 / NBRC 100496 / NCIMB 8023 / NCTC 12954 / NRRL B-1118 / 37Y) protein is 3-phosphoshikimate 1-carboxyvinyltransferase.